The following is a 210-amino-acid chain: Inner membrane-spanning protein YciB (210 aa).

The next 6 helical transmembrane spans lie at 19–39 (LVLELGPLMVFFFANSRGDWL), 53–73 (IFIATGLFMAATATALIVSWI), 78–98 (LPMMPLISGIVVFVFGALTLW), 115–135 (LFGAILLGGLLFGKSLLGYVF), 148–168 (KLTIRWGVFFLFLAVLNEIVW), and 175–195 (FWVAFKVWGTMPITILFTLAQ).

It belongs to the YciB family.

The protein localises to the cell inner membrane. In terms of biological role, plays a role in cell envelope biogenesis, maintenance of cell envelope integrity and membrane homeostasis. This chain is Inner membrane-spanning protein YciB, found in Sinorhizobium fredii (strain NBRC 101917 / NGR234).